Here is a 380-residue protein sequence, read N- to C-terminus: Cytochrome b (380 aa).

4 helical membrane passes run 33–53 (FGSL…FLAM), 77–98 (WLIR…YFHI), 113–133 (WNIG…GYVL), and 178–198 (FFAF…LHLL). His83 and His97 together coordinate heme b. His182 and His196 together coordinate heme b. A ubiquinone is bound at residue His201. The next 4 membrane-spanning stretches (helical) occupy residues 226–246 (YKDL…ALFS), 288–308 (LGGV…PFLH), 320–340 (VSQF…WIGG), and 347–367 (FIII…VFFP).

It belongs to the cytochrome b family. The cytochrome bc1 complex contains 3 respiratory subunits (MT-CYB, CYC1 and UQCRFS1), 2 core proteins (UQCRC1 and UQCRC2) and probably 6 low-molecular weight proteins. Heme b serves as cofactor.

The protein resides in the mitochondrion inner membrane. Component of the ubiquinol-cytochrome c reductase complex (complex III or cytochrome b-c1 complex) that is part of the mitochondrial respiratory chain. The b-c1 complex mediates electron transfer from ubiquinol to cytochrome c. Contributes to the generation of a proton gradient across the mitochondrial membrane that is then used for ATP synthesis. The polypeptide is Cytochrome b (mt-cyb) (Sarda sarda (Atlantic bonito)).